The chain runs to 116 residues: MSLAIDLEVKKDVLCIRLQGELDHHTAESLRASVTKAIEENGIRHLVLNLEQLSFMDSSGLGVILGRYKQIKQKNGEMIVCAISPAVKRLFELSGLFKIIRLDESEQYALHRLGVA.

Residues 3–113 enclose the STAS domain; sequence LAIDLEVKKD…ESEQYALHRL (111 aa). Serine 58 is modified (phosphoserine).

This sequence belongs to the anti-sigma-factor antagonist family. Phosphorylated by SpoIIAB on a serine residue.

In terms of biological role, in the phosphorylated form it could act as an anti-anti-sigma factor that counteracts SpoIIAB and thus releases sigma f from inhibition. This is Anti-sigma F factor antagonist (spoIIAA) from Heyndrickxia coagulans (Weizmannia coagulans).